The chain runs to 623 residues: Protein vein (623 aa).

The N-terminal stretch at 1–40 is a signal peptide; the sequence is MYAQHLRKWSLKTKKQLMPLILLIISYMLLLNTCVLSSSA. 4 disordered regions span residues 70 to 98, 130 to 162, 184 to 214, and 229 to 317; these read IPLS…SSNN, DAGS…SMQK, AASS…NYSS, and PESM…QRYN. 2 stretches are compositionally biased toward low complexity: residues 72–98 and 136–158; these read LSSD…SSNN and PAQQ…QQQQ. An N-linked (GlcNAc...) asparagine glycan is attached at asparagine 76. Asparagine 211 carries N-linked (GlcNAc...) asparagine glycosylation. Residues 233–248 are compositionally biased toward basic and acidic residues; it reads LEDRSPEQAARSRRDG. The N-linked (GlcNAc...) asparagine glycan is linked to asparagine 252. Over residues 255–267 the composition is skewed to low complexity; it reads RQQQRTGHRQQLQ. Basic residues predominate over residues 305–316; the sequence is QRRKHQRKHQRY. 6 N-linked (GlcNAc...) asparagine glycosylation sites follow: asparagine 350, asparagine 381, asparagine 424, asparagine 449, asparagine 521, and asparagine 574. In terms of domain architecture, Ig-like C2-type spans 457–542; sequence TKIFSKPSKA…AKNKASKAIA (86 aa). Cystine bridges form between cysteine 478–cysteine 531, cysteine 566–cysteine 577, cysteine 571–cysteine 588, and cysteine 590–cysteine 599. The EGF-like domain maps to 561–599; that stretch reads ASGIPCNFDYCFHNGTCRMIPDINEVYCRCPTEYFGNRC.

The protein localises to the secreted. Ligand for the EGF receptor. Seems to play a role in the global proliferation of wing disc cells and the larval patterning. Shows a strong synergistic genetic interaction with spi, suggesting a molecular interdependence. Required for the development of interveins cells. The sequence is that of Protein vein (vn) from Drosophila melanogaster (Fruit fly).